The primary structure comprises 777 residues: Gliding motility regulatory protein (777 aa).

The 108-residue stretch at 1–108 folds into the HPt domain; it reads MDTEALKKSL…SDLNEDLSGA (108 aa). Phosphohistidine; by autocatalysis is present on His49. Disordered stretches follow at residues 129 to 149 and 164 to 212; these read TPPA…PPAP and PAPV…KSAV. 2 stretches are compositionally biased toward pro residues: residues 139 to 149 and 164 to 177; these read VAPPPAPPPAP and PAPV…PPTQ. A compositionally biased stretch (low complexity) spans 178–197; that stretch reads APVAEPGAHAAAAAPHPAAA. The region spanning 270–509 is the Histidine kinase domain; it reads DISNEVREQL…TITLRLPQSL (240 aa). In terms of domain architecture, CheW-like spans 511-645; it reads LMKVLLVRLG…VPDIMAEVRR (135 aa). The Response regulatory domain maps to 660–776; sequence RVLLVDDSPI…EVLAQAIDRL (117 aa). Asp709 carries the 4-aspartylphosphate modification.

The enzyme catalyses ATP + protein L-histidine = ADP + protein N-phospho-L-histidine.. Its function is as follows. FrzE is involved in a sensory transduction pathway that controls the frequency at which cells reverse their gliding direction. FrzE seems to be capable of autophosphorylating itself on a histidine residue and then to transfer that group to an aspartate residue in the C-terminal part of the protein. The sequence is that of Gliding motility regulatory protein (frzE) from Myxococcus xanthus.